We begin with the raw amino-acid sequence, 1274 residues long: DENN domain-containing protein 5B (1274 aa).

Residue serine 2 is modified to N-acetylserine. In terms of domain architecture, uDENN spans aspartate 39–serine 244. Serine 49 and serine 178 each carry phosphoserine. In terms of domain architecture, cDENN spans glutamate 263–valine 399. The 181-residue stretch at leucine 401–glutamate 581 folds into the dDENN domain. Residues leucine 772–threonine 932 enclose the RUN 1 domain. Phosphoserine is present on serine 822. Residues leucine 916–isoleucine 936 traverse the membrane as a helical segment. In terms of domain architecture, PLAT spans isoleucine 936 to isoleucine 1044. Residue threonine 1062 is modified to Phosphothreonine. Serine 1068, serine 1076, and serine 1079 each carry phosphoserine. In terms of domain architecture, RUN 2 spans threonine 1118–serine 1267.

Belongs to the RAB6IP1 family.

The protein localises to the membrane. Its function is as follows. Guanine nucleotide exchange factor (GEF) which may activate RAB39A and/or RAB39B. Promotes the exchange of GDP to GTP, converting inactive GDP-bound Rab proteins into their active GTP-bound form. In Mus musculus (Mouse), this protein is DENN domain-containing protein 5B (Dennd5b).